The primary structure comprises 168 residues: INO80 complex subunit 3 (168 aa).

Residues Thr-115–Leu-129 show a composition bias toward polar residues. The disordered stretch occupies residues Thr-115–Lys-168. The segment covering Gln-130–Ser-148 has biased composition (low complexity). Residues Thr-156–Lys-168 are compositionally biased toward basic and acidic residues.

In terms of assembly, component of the INO80 chromatin remodeling complex.

Its subcellular location is the nucleus. Functionally, component of the INO80 complex which remodels chromatin by shifting nucleosomes and is involved in DNA repair. The sequence is that of INO80 complex subunit 3 (iec3) from Schizosaccharomyces pombe (strain 972 / ATCC 24843) (Fission yeast).